A 414-amino-acid polypeptide reads, in one-letter code: Ornithine aminotransferase (414 aa).

Cys154 and Cys163 are joined by a disulfide. Position 262 is an N6-(pyridoxal phosphate)lysine (Lys262).

It belongs to the class-III pyridoxal-phosphate-dependent aminotransferase family. Homodimer. The cofactor is pyridoxal 5'-phosphate. Post-translationally, the disulfide bond between Cys-154 and Cys-163 is reduced by TRX1 which increases OAT catalytic activity.

Its subcellular location is the cytoplasm. The enzyme catalyses a 2-oxocarboxylate + L-ornithine = L-glutamate 5-semialdehyde + an L-alpha-amino acid. The catalysed reaction is L-ornithine + 2-oxoglutarate = L-glutamate 5-semialdehyde + L-glutamate. Its pathway is amino-acid biosynthesis; L-proline biosynthesis; L-glutamate 5-semialdehyde from L-ornithine: step 1/1. With respect to regulation, unlike for mammalian OATs, activity is increased by TRX1-mediated reduction of the disulfide bond between Cys-154 and Cys-163. Binding to TRX1 may also induce conformational changes that facilitate substrate binding. In terms of biological role, catalyzes the transamination of alpha-ketoglutarate with ornithine or N-acetylornithine and of glutamate-5-semialdehyde with glutamate and alanine. This is Ornithine aminotransferase from Plasmodium chabaudi chabaudi.